Here is a 120-residue protein sequence, read N- to C-terminus: Ribosome-binding factor A (120 aa).

This sequence belongs to the RbfA family. As to quaternary structure, monomer. Binds 30S ribosomal subunits, but not 50S ribosomal subunits or 70S ribosomes.

It is found in the cytoplasm. Functionally, one of several proteins that assist in the late maturation steps of the functional core of the 30S ribosomal subunit. Associates with free 30S ribosomal subunits (but not with 30S subunits that are part of 70S ribosomes or polysomes). Required for efficient processing of 16S rRNA. May interact with the 5'-terminal helix region of 16S rRNA. This is Ribosome-binding factor A from Borrelia garinii subsp. bavariensis (strain ATCC BAA-2496 / DSM 23469 / PBi) (Borreliella bavariensis).